The primary structure comprises 199 residues: Single-stranded DNA-binding protein 2 (199 aa).

The SSB domain maps to 1 to 110 (MAGETVITVV…LDVDEVGASL (110 aa)). The disordered stretch occupies residues 114-199 (TAKVTKTSGQ…GGGYSDEPPF (86 aa)). A compositionally biased stretch (gly residues) spans 123–156 (QGRGGQGGYGGGGGGQGGGGWGGGPGGGQQGGGA). Residues 157–166 (PADDPWATGG) show a composition bias toward low complexity. Residues 167–193 (APAGGQQGGGGQGGGGWGGGSGGGGGY) are compositionally biased toward gly residues.

Homotetramer. In terms of processing, phosphorylated on tyrosine residue(s) when expressed in E.coli.

The protein localises to the cytoplasm. It localises to the nucleoid. This is Single-stranded DNA-binding protein 2 (ssb2) from Streptomyces coelicolor (strain ATCC BAA-471 / A3(2) / M145).